Reading from the N-terminus, the 110-residue chain is Large ribosomal subunit protein uL24 (110 aa).

It belongs to the universal ribosomal protein uL24 family. Part of the 50S ribosomal subunit.

One of two assembly initiator proteins, it binds directly to the 5'-end of the 23S rRNA, where it nucleates assembly of the 50S subunit. Functionally, one of the proteins that surrounds the polypeptide exit tunnel on the outside of the subunit. The chain is Large ribosomal subunit protein uL24 from Thermus thermophilus (strain ATCC BAA-163 / DSM 7039 / HB27).